The following is an 898-amino-acid chain: Putative disease resistance protein At1g63350 (898 aa).

Positions 24-88 (VSYTHNLEKN…IESRVNDLLN (65 aa)) form a coiled coil. An NB-ARC domain is found at 137 to 440 (DQASTSEVEE…CEEIIDGSEG (304 aa)). 179-186 (GMGGVGKT) contributes to the ATP binding site. LRR repeat units follow at residues 516 to 537 (VVRRMSLMKNNIAHLDGRLDCM), 538 to 559 (ELTTLLLQSTHLEKISSEFFNS), 562 to 584 (KLAVLDLSGNYYLSELPNGISEL), 586 to 608 (SLQYLNLSSTGIRHLPKGLQELK), 609 to 631 (KLIHLYLERTSQLGSMVGISCLH), and 632 to 654 (NLKVLKLSGSSYAWDLDTVKELE).

Belongs to the disease resistance NB-LRR family.

In terms of biological role, potential disease resistance protein. This chain is Putative disease resistance protein At1g63350, found in Arabidopsis thaliana (Mouse-ear cress).